We begin with the raw amino-acid sequence, 192 residues long: Phosphoheptose isomerase (192 aa).

Residues 35–192 (LIETLENQGK…CIERHFANKN (158 aa)) enclose the SIS domain. Substrate is bound at residue 50–52 (NGG). Residues histidine 59 and glutamate 63 each contribute to the Zn(2+) site. Substrate is bound by residues glutamate 63, 92 to 93 (ND), 118 to 120 (STS), serine 123, and glutamine 170. Zn(2+) is bound by residues glutamine 170 and histidine 178.

It belongs to the SIS family. GmhA subfamily. As to quaternary structure, homotetramer. It depends on Zn(2+) as a cofactor.

The protein localises to the cytoplasm. It catalyses the reaction 2 D-sedoheptulose 7-phosphate = D-glycero-alpha-D-manno-heptose 7-phosphate + D-glycero-beta-D-manno-heptose 7-phosphate. The protein operates within carbohydrate biosynthesis; D-glycero-D-manno-heptose 7-phosphate biosynthesis; D-glycero-alpha-D-manno-heptose 7-phosphate and D-glycero-beta-D-manno-heptose 7-phosphate from sedoheptulose 7-phosphate: step 1/1. Its function is as follows. Catalyzes the isomerization of sedoheptulose 7-phosphate in D-glycero-D-manno-heptose 7-phosphate. The polypeptide is Phosphoheptose isomerase (Helicobacter pylori (strain Shi470)).